A 368-amino-acid polypeptide reads, in one-letter code: tRNA-specific 2-thiouridylase MnmA (368 aa).

ATP-binding positions include 14-21 (AMSGGVDS) and leucine 40. Cysteine 108 serves as the catalytic Nucleophile. A disulfide bridge connects residues cysteine 108 and cysteine 204. Glycine 132 contributes to the ATP binding site. The segment at 154-156 (KDQ) is interaction with tRNA. The active-site Cysteine persulfide intermediate is the cysteine 204.

It belongs to the MnmA/TRMU family.

It is found in the cytoplasm. It carries out the reaction S-sulfanyl-L-cysteinyl-[protein] + uridine(34) in tRNA + AH2 + ATP = 2-thiouridine(34) in tRNA + L-cysteinyl-[protein] + A + AMP + diphosphate + H(+). In terms of biological role, catalyzes the 2-thiolation of uridine at the wobble position (U34) of tRNA, leading to the formation of s(2)U34. The polypeptide is tRNA-specific 2-thiouridylase MnmA (Rickettsia canadensis (strain McKiel)).